A 304-amino-acid chain; its full sequence is Acetyl-coenzyme A carboxylase carboxyl transferase subunit beta (304 aa).

The 270-residue stretch at 25–294 (VWTKCDSCGQ…PSVVESKADT (270 aa)) folds into the CoA carboxyltransferase N-terminal domain. Zn(2+) is bound by residues Cys29, Cys32, Cys48, and Cys51. Residues 29 to 51 (CDSCGQVLYRAELERNLEVCPKC) form a C4-type zinc finger.

It belongs to the AccD/PCCB family. Acetyl-CoA carboxylase is a heterohexamer composed of biotin carboxyl carrier protein (AccB), biotin carboxylase (AccC) and two subunits each of ACCase subunit alpha (AccA) and ACCase subunit beta (AccD). It depends on Zn(2+) as a cofactor.

The protein localises to the cytoplasm. It catalyses the reaction N(6)-carboxybiotinyl-L-lysyl-[protein] + acetyl-CoA = N(6)-biotinyl-L-lysyl-[protein] + malonyl-CoA. It functions in the pathway lipid metabolism; malonyl-CoA biosynthesis; malonyl-CoA from acetyl-CoA: step 1/1. Its function is as follows. Component of the acetyl coenzyme A carboxylase (ACC) complex. Biotin carboxylase (BC) catalyzes the carboxylation of biotin on its carrier protein (BCCP) and then the CO(2) group is transferred by the transcarboxylase to acetyl-CoA to form malonyl-CoA. The polypeptide is Acetyl-coenzyme A carboxylase carboxyl transferase subunit beta (Yersinia pestis bv. Antiqua (strain Nepal516)).